Reading from the N-terminus, the 122-residue chain is Large ribosomal subunit protein uL14 (122 aa).

It belongs to the universal ribosomal protein uL14 family. Part of the 50S ribosomal subunit. Forms a cluster with proteins L3 and L19. In the 70S ribosome, L14 and L19 interact and together make contacts with the 16S rRNA in bridges B5 and B8.

Binds to 23S rRNA. Forms part of two intersubunit bridges in the 70S ribosome. This is Large ribosomal subunit protein uL14 from Streptococcus pyogenes serotype M2 (strain MGAS10270).